A 471-amino-acid chain; its full sequence is Ubiquitin carboxyl-terminal hydrolase calypso (471 aa).

Residues Gly45–Pro276 form the UCH catalytic domain. The active-site Nucleophile is the Cys131. His213 functions as the Proton donor in the catalytic mechanism. Coiled-coil stretches lie at residues Trp240–Glu256 and Gly298–Thr324. Residues Asp307–Leu326 form a disordered region. Residues Asn314–Leu326 show a composition bias toward polar residues. In terms of domain architecture, ULD spans Asn375 to Pro403. A positively charged C-terminal tail required for binding nucleosomes region spans residues Lys405 to Lys471. Residues Ala412–Lys471 form a disordered region. Over residues Ser420–Ala447 the composition is skewed to low complexity. Over residues Pro457–Lys471 the composition is skewed to basic residues.

This sequence belongs to the peptidase C12 family. BAP1 subfamily. As to quaternary structure, catalytic component of the polycomb repressive deubiquitinase (PR-DUB) complex, at least composed of caly/calypso, Asx and sba (MBD5/6 homolog). The PR-DUB complex associates with nucleosomes to mediate deubiquitination of histone H2AK118ub1 substrates; the association requires the positively charged C-terminal tail of caly, probably due to direct binding of DNA. Interacts (via ULD domain) with Asx (via DEUBAD domain); the interaction produces a stable heterodimer with a composite binding site for ubiquitin. Homodimerizes (via coiled-coil hinge-region between the UCH and ULD domains) to mediate assembly of 2 copies of the caly-Asx heterodimer into a bisymmetric tetramer; dimerization enhances PR-DUB association with nucleosomes.

The protein localises to the nucleus. The catalysed reaction is Thiol-dependent hydrolysis of ester, thioester, amide, peptide and isopeptide bonds formed by the C-terminal Gly of ubiquitin (a 76-residue protein attached to proteins as an intracellular targeting signal).. Its function is as follows. Catalytic component of the polycomb repressive deubiquitinase (PR-DUB) complex, a complex that specifically mediates deubiquitination of histone H2A monoubiquitinated at 'Lys-119' (H2AK118ub1). Mediates bisymmetric organization of the PR-DUB complex and is involved in association with nucleosomes to mediate deubiquitination. Does not deubiquitinate monoubiquitinated histone H2B. Required to maintain the transcriptionally repressive state of homeotic genes throughout development. The PR-DUB complex has weak or no activity toward 'Lys-48'- and 'Lys-63'-linked polyubiquitin chains. Polycomb group (PcG) protein. In Drosophila melanogaster (Fruit fly), this protein is Ubiquitin carboxyl-terminal hydrolase calypso.